The sequence spans 221 residues: Esterase C25G4.2 (221 aa).

Residues serine 106, aspartate 166, and histidine 194 each act as charge relay system in the active site.

This sequence belongs to the LovG family.

This chain is Esterase C25G4.2, found in Caenorhabditis elegans.